The following is a 767-amino-acid chain: GPI ethanolamine phosphate transferase 2 (767 aa).

N-linked (GlcNAc...) asparagine glycans are attached at residues Asn186 and Asn401. 2 helical membrane-spanning segments follow: residues Leu407–Gly427 and Val434–Val454. The N-linked (GlcNAc...) asparagine glycan is linked to Asn490. Helical transmembrane passes span Ile513–Ser533, Ile538–Val558, and Ile595–Ala615. Asn627 carries N-linked (GlcNAc...) asparagine glycosylation. 3 consecutive transmembrane segments (helical) span residues Ser655 to Ala675, Thr695 to Leu715, and Leu733 to Leu755.

Belongs to the PIGG/PIGN/PIGO family. PIGG subfamily.

It localises to the endoplasmic reticulum membrane. Its pathway is glycolipid biosynthesis; glycosylphosphatidylinositol-anchor biosynthesis. Its function is as follows. Ethanolamine phosphate transferase involved in glycosylphosphatidylinositol-anchor biosynthesis. Transfers ethanolamine phosphate to the GPI second mannose. The polypeptide is GPI ethanolamine phosphate transferase 2 (las21) (Aspergillus fumigatus (strain ATCC MYA-4609 / CBS 101355 / FGSC A1100 / Af293) (Neosartorya fumigata)).